Consider the following 454-residue polypeptide: tRNA modification GTPase MnmE (454 aa).

(6S)-5-formyl-5,6,7,8-tetrahydrofolate contacts are provided by R23, E80, and K120. The TrmE-type G domain maps to 216–377 (GMKVVIAGRP…LRNHLKQSMG (162 aa)). N226 contributes to the K(+) binding site. GTP contacts are provided by residues 226 to 231 (NAGKSS), 245 to 251 (TDIAGTT), 270 to 273 (DTAG), 335 to 338 (NKAD), and 358 to 360 (SAR). S230 serves as a coordination point for Mg(2+). The K(+) site is built by T245, I247, and T250. Residue T251 participates in Mg(2+) binding. K454 is a binding site for (6S)-5-formyl-5,6,7,8-tetrahydrofolate.

Belongs to the TRAFAC class TrmE-Era-EngA-EngB-Septin-like GTPase superfamily. TrmE GTPase family. In terms of assembly, homodimer. Heterotetramer of two MnmE and two MnmG subunits. It depends on K(+) as a cofactor.

The protein resides in the cytoplasm. Functionally, exhibits a very high intrinsic GTPase hydrolysis rate. Involved in the addition of a carboxymethylaminomethyl (cmnm) group at the wobble position (U34) of certain tRNAs, forming tRNA-cmnm(5)s(2)U34. The chain is tRNA modification GTPase MnmE from Salmonella gallinarum (strain 287/91 / NCTC 13346).